Consider the following 138-residue polypeptide: Translation initiation factor 5A (138 aa).

A Hypusine modification is found at Lys-42.

Belongs to the eIF-5A family.

It is found in the cytoplasm. Its function is as follows. Functions by promoting the formation of the first peptide bond. This Pyrobaculum aerophilum (strain ATCC 51768 / DSM 7523 / JCM 9630 / CIP 104966 / NBRC 100827 / IM2) protein is Translation initiation factor 5A (eif5a).